The following is a 221-amino-acid chain: Eukaryotic translation initiation factor 3 subunit K (221 aa).

In terms of domain architecture, PCI spans 46-207 (YDLEANLACL…NIKTKHITEK (162 aa)).

Belongs to the eIF-3 subunit K family. As to quaternary structure, component of the eukaryotic translation initiation factor 3 (eIF-3) complex.

It is found in the cytoplasm. In terms of biological role, component of the eukaryotic translation initiation factor 3 (eIF-3) complex, which is involved in protein synthesis of a specialized repertoire of mRNAs and, together with other initiation factors, stimulates binding of mRNA and methionyl-tRNAi to the 40S ribosome. The eIF-3 complex specifically targets and initiates translation of a subset of mRNAs involved in cell proliferation. The protein is Eukaryotic translation initiation factor 3 subunit K of Aedes aegypti (Yellowfever mosquito).